The chain runs to 506 residues: Glutamate--tRNA ligase (506 aa).

A 'HIGH' region motif is present at residues 23–33 (PSPTGTPHVGL). A 'KMSKS' region motif is present at residues 267-271 (KLSKR). K270 contacts ATP.

This sequence belongs to the class-I aminoacyl-tRNA synthetase family. Glutamate--tRNA ligase type 1 subfamily. As to quaternary structure, monomer.

The protein resides in the cytoplasm. The catalysed reaction is tRNA(Glu) + L-glutamate + ATP = L-glutamyl-tRNA(Glu) + AMP + diphosphate. Catalyzes the attachment of glutamate to tRNA(Glu) in a two-step reaction: glutamate is first activated by ATP to form Glu-AMP and then transferred to the acceptor end of tRNA(Glu). The chain is Glutamate--tRNA ligase from Clavibacter michiganensis subsp. michiganensis (strain NCPPB 382).